The following is a 521-amino-acid chain: Probable protein kinase UbiB (521 aa).

The Protein kinase domain occupies 119-497 (QFDETPIASA…QKRTNRLLQT (379 aa)). Residues 125-133 (IASASIAQV) and K151 each bind ATP. The active-site Proton acceptor is the D286. A helical transmembrane segment spans residues 496–516 (QTIIYGGIGFVLGLLAMQLLV).

The protein belongs to the ABC1 family. UbiB subfamily.

It localises to the cell inner membrane. It functions in the pathway cofactor biosynthesis; ubiquinone biosynthesis [regulation]. Its function is as follows. Is probably a protein kinase regulator of UbiI activity which is involved in aerobic coenzyme Q (ubiquinone) biosynthesis. This chain is Probable protein kinase UbiB, found in Variovorax paradoxus (strain S110).